The chain runs to 369 residues: NAD(P)H-quinone oxidoreductase subunit 1, chloroplastic (369 aa).

8 helical membrane-spanning segments follow: residues 29 to 49, 97 to 117, 129 to 149, 167 to 187, 205 to 225, 255 to 275, 305 to 325, and 348 to 368; these read IWII…VLVI, IWLF…SYLV, LGIG…GLLM, AAQS…ISLL, LLGW…ISSL, FGLF…FVTV, IINA…FLFV, and FLLP…ILLL.

Belongs to the complex I subunit 1 family. As to quaternary structure, NDH is composed of at least 16 different subunits, 5 of which are encoded in the nucleus.

The protein localises to the plastid. It is found in the chloroplast thylakoid membrane. It carries out the reaction a plastoquinone + NADH + (n+1) H(+)(in) = a plastoquinol + NAD(+) + n H(+)(out). The enzyme catalyses a plastoquinone + NADPH + (n+1) H(+)(in) = a plastoquinol + NADP(+) + n H(+)(out). In terms of biological role, NDH shuttles electrons from NAD(P)H:plastoquinone, via FMN and iron-sulfur (Fe-S) centers, to quinones in the photosynthetic chain and possibly in a chloroplast respiratory chain. The immediate electron acceptor for the enzyme in this species is believed to be plastoquinone. Couples the redox reaction to proton translocation, and thus conserves the redox energy in a proton gradient. The polypeptide is NAD(P)H-quinone oxidoreductase subunit 1, chloroplastic (Angiopteris evecta (Mule's foot fern)).